Here is a 772-residue protein sequence, read N- to C-terminus: MFANRVRQAQKLYQKRFFSLGNNSTISKQQFKNSSNNNNNKNGGNKNGFYQKAFIATTVALTTTLLTATTLLDDNTNSEKEILKSQRQTFEKYASTTLEGERQMTAEDFLSALTTLESDKQSGEHEILKASLDADKFKVLFQMADVDHTGYISFDEYVMFDELMAKPEAEYFLAFKLFDRDGNGYISKNDFKHVITASLDPSIPFNFDCELVNLYFGDGRTELNYSQFTQLLKDLQQERIKQEFKFHDKYNSGYIPRDKFAKVLGSVKLRKIPDHVRDKLESISELNLLSGHPNEVSYSQFVAANDMLLHIPSYGRVLKAAILKNKKDNINKEEFLTEARSSTSIEITPLEIDLIFHLFDLNKDGKLSISDFEKSTGLNINKIGGGTNYSDSYPSDSHVTIQNSSTTPSPSTPITNTAAAIALNKKHGKTFAQQVLESIENFALGSIAGGIGAAAVYPIDLVKTRMQNQRAVDPAKRLYVNSWDCFKKVVKFEGVRGLYKGILPQMVGVAPEKAIKLTVNDLLRDLFGDKSKGEIYFPLEVLAGGFAGMSQVCVTNPLEIVKIRLQVQSTGPKVSAITIIKELGLAGLYKGAGACLLRDIPFSAIYFPTYAKMKTILANEDGKLGPMDLLLAGAVAGIPAASLVTPADVIKTRLQVKANAGEQTYTGIRDCFQKILKEEGPRALFKGALARVFRSSPQFGVTLVSYELLQKALLPDAEYKPPTNAPITQKDFDVIRGNTNTVQRVIDMESKFGTLHQTRDNNKSSNGGENKN.

An N-terminal domain region spans residues M1–G377. EF-hand domains follow at residues L132–A165, K166–P201, L235–R270, and I347–K382. 10 residues coordinate Ca(2+): D145, D147, T149, Y151, E156, D179, D181, N183, Y185, and D190. Residues D360, N362, D364, K366, and D371 each contribute to the Ca(2+) site. Residues L378 to A422 form a linker loop domain region. Residues A432–K720 form a carrier domain region. Solcar repeat units lie at residues L436 to L526, I535 to I616, and L624 to A712. Transmembrane regions (helical) follow at residues F442–I459, G501–N520, G545–L558, G591–Y610, L630–A647, and G687–Y706. The tract at residues P721 to N772 is C-terminal domain. The disordered stretch occupies residues K751–N772. Positions K763–N772 are enriched in low complexity.

The protein belongs to the mitochondrial carrier (TC 2.A.29) family. In terms of assembly, homodimer (via N-terminus).

Its subcellular location is the mitochondrion inner membrane. Its function is as follows. Mitochondrial and calcium-binding carrier that catalyzes the calcium-dependent exchange of cytoplasmic glutamate with mitochondrial aspartate across the mitochondrial inner membrane. In Dictyostelium discoideum (Social amoeba), this protein is Calcium-binding mitochondrial carrier protein (mcfO).